Reading from the N-terminus, the 207-residue chain is Guanylate kinase (207 aa).

The Guanylate kinase-like domain maps to 6–185 (GLLIVLSGPS…AKNRIQSIVE (180 aa)). 13–20 (GPSGVGKG) contacts ATP.

The protein belongs to the guanylate kinase family.

The protein localises to the cytoplasm. The enzyme catalyses GMP + ATP = GDP + ADP. In terms of biological role, essential for recycling GMP and indirectly, cGMP. In Staphylococcus epidermidis (strain ATCC 35984 / DSM 28319 / BCRC 17069 / CCUG 31568 / BM 3577 / RP62A), this protein is Guanylate kinase.